The sequence spans 355 residues: 3-isopropylmalate dehydrogenase (355 aa).

Residues Arg90, Arg100, Arg128, and Asp222 each contribute to the substrate site. The Mg(2+) site is built by Asp222, Asp246, and Asp250. NAD(+) is bound at residue 280 to 292 (GSAPDIAGKGIAN).

The protein belongs to the isocitrate and isopropylmalate dehydrogenases family. LeuB type 1 subfamily. Homodimer. Mg(2+) serves as cofactor. Mn(2+) is required as a cofactor.

Its subcellular location is the cytoplasm. It catalyses the reaction (2R,3S)-3-isopropylmalate + NAD(+) = 4-methyl-2-oxopentanoate + CO2 + NADH. It participates in amino-acid biosynthesis; L-leucine biosynthesis; L-leucine from 3-methyl-2-oxobutanoate: step 3/4. Catalyzes the oxidation of 3-carboxy-2-hydroxy-4-methylpentanoate (3-isopropylmalate) to 3-carboxy-4-methyl-2-oxopentanoate. The product decarboxylates to 4-methyl-2 oxopentanoate. The sequence is that of 3-isopropylmalate dehydrogenase from Burkholderia lata (strain ATCC 17760 / DSM 23089 / LMG 22485 / NCIMB 9086 / R18194 / 383).